A 154-amino-acid polypeptide reads, in one-letter code: Large ribosomal subunit protein uL30 (154 aa).

It belongs to the universal ribosomal protein uL30 family. In terms of assembly, part of the 50S ribosomal subunit.

The chain is Large ribosomal subunit protein uL30 from Methanococcus maripaludis (strain DSM 14266 / JCM 13030 / NBRC 101832 / S2 / LL).